Here is a 159-residue protein sequence, read N- to C-terminus: MAVLWRLSAVCGAQGGRALLLRTPVVRPAHISAFLQDRPIPEWCGVQHIHLSPGHHSGSKAASLHWTSERVVSVLLLGLLPAAYLNPCSAMDYSLAATLTLHGHWGLGQVVTDYVHGDASQKAAKAGLLALSALTFAGLCYFNYHDVGICKAVAMLWKL.

The N-terminal 56 residues, 1 to 56, are a transit peptide targeting the mitochondrion; the sequence is MAVLWRLSAVCGAQGGRALLLRTPVVRPAHISAFLQDRPIPEWCGVQHIHLSPGHH. At 57-63 the chain is on the mitochondrial matrix side; sequence SGSKAAS. Residues 64–85 form a helical membrane-spanning segment; it reads LHWTSERVVSVLLLGLLPAAYL. The Mitochondrial intermembrane segment spans residues 86–90; sequence NPCSA. A helical membrane pass occupies residues 91–111; sequence MDYSLAATLTLHGHWGLGQVV. A heme b-binding site is contributed by His102. The Mitochondrial matrix segment spans residues 112–120; that stretch reads TDYVHGDAS. Position 114 (Tyr114) interacts with a ubiquinone. Residues 121–142 traverse the membrane as a helical segment; that stretch reads QKAAKAGLLALSALTFAGLCYF. Residues 143–159 lie on the Mitochondrial intermembrane side of the membrane; the sequence is NYHDVGICKAVAMLWKL.

This sequence belongs to the CybS family. In terms of assembly, component of complex II composed of four subunits: the flavoprotein (FP) SDHA, iron-sulfur protein (IP) SDHB, and a cytochrome b560 composed of SDHC and SDHD.

Its subcellular location is the mitochondrion inner membrane. It participates in carbohydrate metabolism; tricarboxylic acid cycle. Functionally, membrane-anchoring subunit of succinate dehydrogenase (SDH) that is involved in complex II of the mitochondrial electron transport chain and is responsible for transferring electrons from succinate to ubiquinone (coenzyme Q). SDH also oxidizes malate to the non-canonical enol form of oxaloacetate, enol-oxaloacetate. Enol-oxaloacetate, which is a potent inhibitor of the succinate dehydrogenase activity, is further isomerized into keto-oxaloacetate. This is Succinate dehydrogenase [ubiquinone] cytochrome b small subunit, mitochondrial (SDHD) from Pongo abelii (Sumatran orangutan).